The following is a 105-amino-acid chain: Spermatogenesis-associated protein 8 (105 aa).

In terms of tissue distribution, expressed at high levels in adult testis, at moderate levels in sperm and at low levels in fetal testis. Not detected in other tissues.

The protein is Spermatogenesis-associated protein 8 (SPATA8) of Homo sapiens (Human).